We begin with the raw amino-acid sequence, 195 residues long: Guanylate kinase (195 aa).

Residues 12-191 form the Guanylate kinase-like domain; that stretch reads GLIILISGPS…TIEDIKQLIL (180 aa). 19 to 26 is an ATP binding site; it reads GPSGVGKG.

The protein belongs to the guanylate kinase family.

The protein localises to the cytoplasm. The catalysed reaction is GMP + ATP = GDP + ADP. Essential for recycling GMP and indirectly, cGMP. The chain is Guanylate kinase (gmk) from Mycoplasmoides gallisepticum (strain R(low / passage 15 / clone 2)) (Mycoplasma gallisepticum).